The primary structure comprises 1176 residues: Leucine--tRNA ligase, cytoplasmic (1176 aa).

Residues Y52 and Y54 each contribute to the L-leucine site. A 'HIGH' region motif is present at residues 60 to 63; the sequence is HLGH. The tract at residues 115 to 142 is disordered; the sequence is PDFPDEEDEEEETNVKTEDTRIKDKAKG. The segment covering 117–126 has biased composition (acidic residues); sequence FPDEEDEEEE. Basic and acidic residues predominate over residues 127–139; that stretch reads TNVKTEDTRIKDK. At S167 the chain carries Phosphoserine. The interval 260–509 is editing domain; the sequence is GPQEYTLLKL…DAGDALIYME (250 aa). L594 and S597 together coordinate L-leucine. The 'KMSKS' region signature appears at 716-720; sequence KMSKS. K719 serves as a coordination point for ATP. Residue S720 is modified to Phosphoserine. N6-acetyllysine is present on residues K970 and K1047.

The protein belongs to the class-I aminoacyl-tRNA synthetase family.

The protein resides in the cytoplasm. It carries out the reaction tRNA(Leu) + L-leucine + ATP = L-leucyl-tRNA(Leu) + AMP + diphosphate. It catalyses the reaction L-methionyl-tRNA(Leu) + H2O = tRNA(Leu) + L-methionine + H(+). With respect to regulation, 5-fluoro-1,3-dihydro-1-hydroxy-1,2-benzoxaborole inhibits LARS1 by forming a covalent adduct with the 3' adenosine of tRNA(Leu) at the editing site, thus locking the enzyme in an inactive conformation. Functionally, aminoacyl-tRNA synthetase that catalyzes the specific attachment of leucine to its cognate tRNA (tRNA(Leu)). It performs tRNA aminoacylation in a two-step reaction: Leu is initially activated by ATP to form a leucyl-adenylate (Leu-AMP) intermediate; then the leucyl moiety is transferred to the acceptor 3' end of the tRNA to yield leucyl-tRNA. To improve the fidelity of catalytic reactions, it is also able to hydrolyze misactivated aminoacyl-adenylate intermediates (pre-transfer editing) and mischarged aminoacyl-tRNAs (post-transfer editing). This chain is Leucine--tRNA ligase, cytoplasmic (LARS1), found in Pongo abelii (Sumatran orangutan).